A 420-amino-acid polypeptide reads, in one-letter code: Protein-lysine 6-oxidase (420 aa).

Residues 1–27 form the signal peptide; it reads MRCAPPGLLLAQLHACIFWSGLWPAGC. Positions 28-171 are cleaved as a propeptide — removed by BMP1; sequence QSPPAAWRQR…RPGREDVMVG (144 aa). The interval 54–177 is disordered; that stretch reads AQYQPPRRRQ…VMVGDDPYSP (124 aa). An N-linked (GlcNAc...) asparagine glycan is attached at asparagine 78. Over residues 82 to 92 the composition is skewed to low complexity; the sequence is PRAAAAAAARP. The segment covering 93-105 has biased composition (pro residues); it reads QPEPQPQAQPQPR. 2 stretches are compositionally biased toward basic residues: residues 107–119 and 134–147; these read RSSRRQPLGRRHW and APRRRPRGRRSRRR. Tyrosine 190 is modified (sulfotyrosine). Residues 216 to 420 form a lysyl-oxidase like region; that stretch reads PDLVPDPYYI…YASGCTISPY (205 aa). Cystine bridges form between cysteine 241-cysteine 247, cysteine 294-cysteine 343, cysteine 327-cysteine 333, cysteine 354-cysteine 364, and cysteine 401-cysteine 415. Cu cation-binding residues include histidine 295, histidine 297, and histidine 299. The segment at residues 323–358 is a cross-link (lysine tyrosylquinone (Lys-Tyr)); sequence KASFCLEDTSCDYGYYRRYACTAHTQGLSPGCYDTY. Residue tyrosine 358 is modified to 2',4',5'-topaquinone.

It belongs to the lysyl oxidase family. The cofactor is Cu cation. Requires lysine tyrosylquinone residue as cofactor. The lysine tyrosylquinone cross-link (LTQ) is generated by condensation of the epsilon-amino group of a lysine with a topaquinone produced by oxidation of tyrosine. Post-translationally, proteolytically cleaved by BMP1 which removes the propeptide. Also proteolytically cleaved by ADAMTS2 and ADAMTS14, but not by ADAMTS3, at an additional cleavage site downstream of the BMP1 cleavage site. The propeptide plays a role in directing the deposition of this enzyme to elastic fibers, via interaction with tropoelastin. Cleavage by BMP1 to remove the propeptide does not increase enzymatic activity but increases binding to collagen. Cleavage by ADAMTS2 produces a form with reduced collagen-binding activity. In terms of processing, sulfated at Tyr-190 and also at either Tyr-186 or Tyr-187 which enhances binding to collagen.

Its subcellular location is the secreted. The protein resides in the extracellular space. It carries out the reaction L-lysyl-[protein] + O2 + H2O = (S)-2-amino-6-oxohexanoyl-[protein] + H2O2 + NH4(+). Its function is as follows. Responsible for the post-translational oxidative deamination of peptidyl lysine residues in precursors to fibrous collagen and elastin. In addition to cross linking of extracellular matrix proteins, it may have a direct role in tumor suppression. This is Protein-lysine 6-oxidase (LOX) from Gallus gallus (Chicken).